The sequence spans 138 residues: Sporulation-specific protein 13 (138 aa).

Positions 1-11 (MMSNSQISKLF) are enriched in polar residues. A disordered region spans residues 1-31 (MMSNSQISKLFSSISNKENSNENALKESTNK). Residues 12 to 23 (SSISNKENSNEN) are compositionally biased toward low complexity. Positions 16-104 (NKENSNENAL…KRELDYLRAK (89 aa)) form a coiled coil.

In terms of assembly, interacts with spo2.

It localises to the cytoplasm. Its subcellular location is the cytoskeleton. The protein resides in the microtubule organizing center. It is found in the spindle pole body. Its function is as follows. Involved in sporulation. Plays a significant role in modification of the spindle pole body prior to spore formation and is required for initiating forespore membrane formation. This chain is Sporulation-specific protein 13 (spo13), found in Schizosaccharomyces pombe (strain 972 / ATCC 24843) (Fission yeast).